The primary structure comprises 326 residues: Probable cell division protein WhiA (326 aa).

The segment at residues S275 to V308 is a DNA-binding region (H-T-H motif).

This sequence belongs to the WhiA family.

Its function is as follows. Involved in cell division and chromosome segregation. The polypeptide is Probable cell division protein WhiA (Clavibacter michiganensis subsp. michiganensis (strain NCPPB 382)).